The sequence spans 150 residues: UPF0208 membrane protein VP2081 (150 aa).

The next 2 helical transmembrane spans lie at 42–62 and 70–90; these read FGIK…MAFN and SIVV…WLGA.

This sequence belongs to the UPF0208 family.

Its subcellular location is the cell inner membrane. In Vibrio parahaemolyticus serotype O3:K6 (strain RIMD 2210633), this protein is UPF0208 membrane protein VP2081.